The sequence spans 549 residues: Urocanate hydratase (549 aa).

Residues 46 to 47 (GG), Q124, E190, R195, 236 to 237 (NA), 257 to 261 (QTSAH), 267 to 268 (YV), and Y316 contribute to the NAD(+) site. Residue C404 is part of the active site. G486 contacts NAD(+).

It belongs to the urocanase family. The cofactor is NAD(+).

The protein localises to the cytoplasm. It carries out the reaction 4-imidazolone-5-propanoate = trans-urocanate + H2O. Its pathway is amino-acid degradation; L-histidine degradation into L-glutamate; N-formimidoyl-L-glutamate from L-histidine: step 2/3. Catalyzes the conversion of urocanate to 4-imidazolone-5-propionate. This chain is Urocanate hydratase, found in Thermoanaerobacter pseudethanolicus (strain ATCC 33223 / 39E) (Clostridium thermohydrosulfuricum).